A 569-amino-acid chain; its full sequence is Amyloid-beta A4 precursor protein-binding family A member 3 (569 aa).

Met1 carries the post-translational modification N-acetylmethionine. Disordered stretches follow at residues 1 to 53 (MEFL…MELD) and 124 to 168 (AQSV…SSPE). Over residues 19–32 (EEPKGPEVPSEDHP) the composition is skewed to basic and acidic residues. The segment covering 132-141 (AQAAPRLLQP) has biased composition (low complexity). Residues Ser166 and Ser367 each carry the phosphoserine modification. The region spanning 212–376 (DGVLFGAKYL…SASASHPHNG (165 aa)) is the PID domain. 2 consecutive PDZ domains span residues 389 to 475 (EVCI…IIHC) and 480 to 554 (TAVI…TMPA).

In terms of assembly, binds to the cytoplasmic domain of amyloid protein (APP). Interacts with HIF1AN (via N-terminus). Interacts with NECAB3; seems to mediate the interaction between NECAB3 and HIF1AN. As to expression, ubiquitous.

The protein resides in the cytoplasm. It localises to the perinuclear region. Functionally, may modulate processing of the amyloid-beta precursor protein (APP) and hence formation of APP-beta. May enhance the activity of HIF1A in macrophages by inhibiting the activity of HIF1AN. This chain is Amyloid-beta A4 precursor protein-binding family A member 3 (Apba3), found in Rattus norvegicus (Rat).